The sequence spans 24 residues: uncharacterized protein (24 aa).

Topologically, residues 1–3 are cytoplasmic; that stretch reads MKK. The helical transmembrane segment at 4–24 threads the bilayer; sequence TTIIMMGVAIIVVLGTELGWW.

It is found in the cell inner membrane. This is an uncharacterized protein from Escherichia coli (strain K12).